Reading from the N-terminus, the 372-residue chain is NAD(P)H-quinone oxidoreductase subunit 1, chloroplastic (372 aa).

8 helical membrane-spanning segments follow: residues I28–I48, P65–L85, W97–V117, I128–I148, A166–M186, F254–V274, G312–L332, and F352–L372.

The protein belongs to the complex I subunit 1 family. As to quaternary structure, NDH is composed of at least 16 different subunits, 5 of which are encoded in the nucleus.

The protein localises to the plastid. It is found in the chloroplast thylakoid membrane. The catalysed reaction is a plastoquinone + NADH + (n+1) H(+)(in) = a plastoquinol + NAD(+) + n H(+)(out). It carries out the reaction a plastoquinone + NADPH + (n+1) H(+)(in) = a plastoquinol + NADP(+) + n H(+)(out). NDH shuttles electrons from NAD(P)H:plastoquinone, via FMN and iron-sulfur (Fe-S) centers, to quinones in the photosynthetic chain and possibly in a chloroplast respiratory chain. The immediate electron acceptor for the enzyme in this species is believed to be plastoquinone. Couples the redox reaction to proton translocation, and thus conserves the redox energy in a proton gradient. The protein is NAD(P)H-quinone oxidoreductase subunit 1, chloroplastic of Staurastrum punctulatum (Green alga).